The chain runs to 545 residues: Chaperonin GroEL (545 aa).

Residues 30–33 (TLGP), Lys-51, 87–91 (DGTTT), Gly-415, and Asp-495 each bind ATP.

The protein belongs to the chaperonin (HSP60) family. In terms of assembly, forms a cylinder of 14 subunits composed of two heptameric rings stacked back-to-back. Interacts with the co-chaperonin GroES.

The protein localises to the cytoplasm. The catalysed reaction is ATP + H2O + a folded polypeptide = ADP + phosphate + an unfolded polypeptide.. In terms of biological role, together with its co-chaperonin GroES, plays an essential role in assisting protein folding. The GroEL-GroES system forms a nano-cage that allows encapsulation of the non-native substrate proteins and provides a physical environment optimized to promote and accelerate protein folding. This is Chaperonin GroEL from Shewanella sp. (strain ANA-3).